The following is a 591-amino-acid chain: Zinc finger protein 48 (591 aa).

N-acetylmethionine is present on Met-1. Disordered stretches follow at residues Met-1–Glu-24 and Gly-55–Asp-80. 2 stretches are compositionally biased toward basic and acidic residues: residues Glu-8–Glu-24 and Gly-55–Val-65. Ser-12 carries the phosphoserine modification. Lys-58 is covalently cross-linked (Glycyl lysine isopeptide (Lys-Gly) (interchain with G-Cter in SUMO2)). 2 C2H2-type zinc fingers span residues Ala-83–His-105 and Tyr-111–His-133. The interval Arg-131 to Glu-160 is disordered. Lys-150 is covalently cross-linked (Glycyl lysine isopeptide (Lys-Gly) (interchain with G-Cter in SUMO2)). 2 consecutive C2H2-type zinc fingers follow at residues Thr-163–His-185 and Tyr-191–His-213. Positions Arg-206–Ala-241 are disordered. Low complexity predominate over residues Pro-224 to Ala-235. Residue Lys-240 forms a Glycyl lysine isopeptide (Lys-Gly) (interchain with G-Cter in SUMO2) linkage. 2 C2H2-type zinc fingers span residues Tyr-246–His-268 and Phe-274–His-296. Residue Lys-300 forms a Glycyl lysine isopeptide (Lys-Gly) (interchain with G-Cter in SUMO2) linkage. 2 C2H2-type zinc fingers span residues Tyr-302–His-324 and His-330–His-352. Positions Pro-372 to Gly-429 are disordered. Low complexity predominate over residues Thr-379–Glu-404. Residues His-423 to His-445 form a C2H2-type 9 zinc finger. A Glycyl lysine isopeptide (Lys-Gly) (interchain with G-Cter in SUMO2) cross-link involves residue Lys-449. The C2H2-type 10 zinc-finger motif lies at Tyr-451 to His-473. Residues Ser-464–Pro-512 are disordered. Positions Pro-480–Ser-496 are enriched in pro residues. C2H2-type zinc fingers lie at residues His-516–His-538 and Tyr-544–His-566. Residues Arg-564–Glu-591 form a disordered region. The span at Pro-581–Glu-591 shows a compositional bias: basic and acidic residues. Residue Lys-583 forms a Glycyl lysine isopeptide (Lys-Gly) (interchain with G-Cter in SUMO2) linkage.

This sequence belongs to the krueppel C2H2-type zinc-finger protein family.

The protein localises to the nucleus. Its function is as follows. May be involved in transcriptional regulation. This chain is Zinc finger protein 48 (Znf48), found in Mus musculus (Mouse).